We begin with the raw amino-acid sequence, 217 residues long: 4-hydroxy-tetrahydrodipicolinate reductase (217 aa).

NAD(+) is bound by residues glycine 7–methionine 12, glycine 71–threonine 73, and serine 95–phenylalanine 98. Residue histidine 127 is the Proton donor/acceptor of the active site. Histidine 128 contributes to the (S)-2,3,4,5-tetrahydrodipicolinate binding site. Catalysis depends on lysine 131, which acts as the Proton donor. Glycine 137–threonine 138 is a (S)-2,3,4,5-tetrahydrodipicolinate binding site.

It belongs to the DapB family.

The protein localises to the cytoplasm. The catalysed reaction is (S)-2,3,4,5-tetrahydrodipicolinate + NAD(+) + H2O = (2S,4S)-4-hydroxy-2,3,4,5-tetrahydrodipicolinate + NADH + H(+). It carries out the reaction (S)-2,3,4,5-tetrahydrodipicolinate + NADP(+) + H2O = (2S,4S)-4-hydroxy-2,3,4,5-tetrahydrodipicolinate + NADPH + H(+). Its pathway is amino-acid biosynthesis; L-lysine biosynthesis via DAP pathway; (S)-tetrahydrodipicolinate from L-aspartate: step 4/4. Functionally, catalyzes the conversion of 4-hydroxy-tetrahydrodipicolinate (HTPA) to tetrahydrodipicolinate. This Thermosipho africanus (strain TCF52B) protein is 4-hydroxy-tetrahydrodipicolinate reductase.